A 60-amino-acid chain; its full sequence is Cecropin-B type 1 (60 aa).

The signal sequence occupies residues 1–24 (MNFNKLFALVLLIGLVLLTGQTEA). The residue at position 58 (isoleucine 58) is an Isoleucine amide.

The protein belongs to the cecropin family.

The protein localises to the secreted. In terms of biological role, cecropins have lytic and antibacterial activity against several Gram-positive and Gram-negative bacteria. This is Cecropin-B type 1 (CECB1) from Aedes albopictus (Asian tiger mosquito).